A 356-amino-acid chain; its full sequence is Cyanide hydratase (356 aa).

A CN hydrolase domain is found at 15–290; the sequence is FKVAAVQAEP…EVVLYANISL (276 aa). The active-site Proton acceptor is Glu-55. Residue Lys-137 is part of the active site. The Nucleophile role is filled by Cys-172. A disordered region spans residues 331–356; the sequence is DEQAASKAQQAEIDNAGKGSIVPSKL.

Belongs to the carbon-nitrogen hydrolase superfamily. Nitrilase family.

The enzyme catalyses formamide = hydrogen cyanide + H2O. Functionally, catalyzes the hydration of cyanide to formamide. Degradation of cyanide may be important for plant pathogenic fungi in infection of cyanogenic plants. The polypeptide is Cyanide hydratase (Armillaria gallica (Bulbous honey fungus)).